Reading from the N-terminus, the 738-residue chain is Polyribonucleotide nucleotidyltransferase (738 aa).

Residues D514 and D520 each contribute to the Mg(2+) site. The KH domain occupies 580–639 (PRIITVKIPVDKIGEVIGPKGKMINQIQEDTGAEITIEDDGTIYIGAQVGSQAEAARATI). Positions 651-723 (GERYLGTVVK…SRGKLSLIPV (73 aa)) constitute an S1 motif domain.

It belongs to the polyribonucleotide nucleotidyltransferase family. The cofactor is Mg(2+).

It localises to the cytoplasm. It catalyses the reaction RNA(n+1) + phosphate = RNA(n) + a ribonucleoside 5'-diphosphate. In terms of biological role, involved in mRNA degradation. Catalyzes the phosphorolysis of single-stranded polyribonucleotides processively in the 3'- to 5'-direction. This is Polyribonucleotide nucleotidyltransferase from Streptomyces avermitilis (strain ATCC 31267 / DSM 46492 / JCM 5070 / NBRC 14893 / NCIMB 12804 / NRRL 8165 / MA-4680).